A 254-amino-acid chain; its full sequence is CDP-diacylglycerol pyrophosphatase (254 aa).

The helical transmembrane segment at 6-26 (YFLLALLVAILAALAGGYYWL) threads the bilayer.

This sequence belongs to the Cdh family.

It is found in the cell inner membrane. The enzyme catalyses a CDP-1,2-diacyl-sn-glycerol + H2O = a 1,2-diacyl-sn-glycero-3-phosphate + CMP + 2 H(+). It participates in phospholipid metabolism; CDP-diacylglycerol degradation; phosphatidate from CDP-diacylglycerol: step 1/1. The sequence is that of CDP-diacylglycerol pyrophosphatase from Klebsiella pneumoniae (strain 342).